We begin with the raw amino-acid sequence, 515 residues long: Galactose-1-phosphate uridylyltransferase (515 aa).

Belongs to the galactose-1-phosphate uridylyltransferase type 2 family.

The protein resides in the cytoplasm. The catalysed reaction is alpha-D-galactose 1-phosphate + UDP-alpha-D-glucose = alpha-D-glucose 1-phosphate + UDP-alpha-D-galactose. Its pathway is carbohydrate metabolism; galactose metabolism. Transfers the UMP unit from UDP-glucose (UDP-Glc) to Gal1P. Can also transfer the UMP unit to GlcNAc1P and GalNAc1P. Involved in the general galactose metabolism, and also involved in the lacto-N-biose I/galacto-N-biose (LNB/GNB) degradation pathway, which is important for host intestinal colonization by bifidobacteria. This chain is Galactose-1-phosphate uridylyltransferase, found in Bifidobacterium longum subsp. longum (strain ATCC 15707 / DSM 20219 / JCM 1217 / NCTC 11818 / E194b).